A 359-amino-acid polypeptide reads, in one-letter code: DNA replication and repair protein RecF (359 aa).

30–37 (GPNGSGKT) is an ATP binding site.

The protein belongs to the RecF family.

Its subcellular location is the cytoplasm. In terms of biological role, the RecF protein is involved in DNA metabolism; it is required for DNA replication and normal SOS inducibility. RecF binds preferentially to single-stranded, linear DNA. It also seems to bind ATP. In Vibrio parahaemolyticus serotype O3:K6 (strain RIMD 2210633), this protein is DNA replication and repair protein RecF.